We begin with the raw amino-acid sequence, 231 residues long: PIAGSMVLAAILLKLGGYGIIRMMQALPTTKTDMFLPFIVLALWGATLANLTCLQQTDLKSLIAYSSISHMGLVVATIIIQTPWGLSGAMALMIAHGFTSSALFCLANTTYERTHTRILILTRGFHNILPMATTWWLLANLMNIAIPPTMNFTGELLITSALFNWCPTTIIMLGLSMLITASYSLHMFLSTQMGPTPTNNQTEPTHSREHLLMVLHLTPLMMISLKPELII.

The next 6 membrane-spanning stretches (helical) occupy residues 1 to 21 (PIAG…YGII), 34 to 54 (MFLP…LTCL), 62 to 84 (LIAY…QTPW), 89 to 111 (AMAL…NTTY), 128 to 148 (ILPM…AIPP), and 169 to 189 (TIIM…HMFL).

The protein belongs to the complex I subunit 4 family.

The protein localises to the mitochondrion membrane. The enzyme catalyses a ubiquinone + NADH + 5 H(+)(in) = a ubiquinol + NAD(+) + 4 H(+)(out). Functionally, core subunit of the mitochondrial membrane respiratory chain NADH dehydrogenase (Complex I) that is believed to belong to the minimal assembly required for catalysis. Complex I functions in the transfer of electrons from NADH to the respiratory chain. The immediate electron acceptor for the enzyme is believed to be ubiquinone. In Bothrops erythromelas (Caatinga lance head), this protein is NADH-ubiquinone oxidoreductase chain 4 (MT-ND4).